A 412-amino-acid polypeptide reads, in one-letter code: Argininosuccinate synthase (412 aa).

ATP-binding positions include 11 to 19 (AYSGGLDTS) and Ala37. L-citrulline-binding residues include Tyr88 and Ser93. Position 116–124 (116–124 (SHGATGKGN)) interacts with ATP. Thr120, Asn124, and Asp125 together coordinate L-aspartate. Asn124 is an L-citrulline binding site. Residues Arg128, Ser181, Ser190, Glu271, and Tyr283 each contribute to the L-citrulline site.

The protein belongs to the argininosuccinate synthase family. Homotetramer.

It is found in the cytoplasm. The protein resides in the cytosol. The enzyme catalyses L-citrulline + L-aspartate + ATP = 2-(N(omega)-L-arginino)succinate + AMP + diphosphate + H(+). The protein operates within amino-acid biosynthesis; L-arginine biosynthesis; L-arginine from L-ornithine and carbamoyl phosphate: step 2/3. Its pathway is nitrogen metabolism; urea cycle; (N(omega)-L-arginino)succinate from L-aspartate and L-citrulline: step 1/1. Its function is as follows. One of the enzymes of the urea cycle, the metabolic pathway transforming neurotoxic amonia produced by protein catabolism into inocuous urea in the liver of ureotelic animals. Catalyzes the formation of arginosuccinate from aspartate, citrulline and ATP and together with ASL it is responsible for the biosynthesis of arginine in most body tissues. The sequence is that of Argininosuccinate synthase from Xenopus tropicalis (Western clawed frog).